The chain runs to 29 residues: MQLVLAAKYIGAAIATIGLIGADDKTSNM.

Belongs to the ATPase C chain family. As to quaternary structure, F-type ATPases have 2 components, CF(1) - the catalytic core - and CF(0) - the membrane proton channel. CF(1) has five subunits: alpha(3), beta(3), gamma(1), delta(1), epsilon(1). CF(0) has three main subunits: a, b and c.

Its subcellular location is the mitochondrion membrane. Functionally, mitochondrial membrane ATP synthase (F(1)F(0) ATP synthase or Complex V) produces ATP from ADP in the presence of a proton gradient across the membrane which is generated by electron transport complexes of the respiratory chain. F-type ATPases consist of two structural domains, F(1) - containing the extramembraneous catalytic core and F(0) - containing the membrane proton channel, linked together by a central stalk and a peripheral stalk. During catalysis, ATP synthesis in the catalytic domain of F(1) is coupled via a rotary mechanism of the central stalk subunits to proton translocation. Part of the complex F(0) domain. A homomeric c-ring of probably 10 subunits is part of the complex rotary element. This Wickerhamomyces pijperi (Yeast) protein is ATP synthase subunit 9, mitochondrial (ATP9).